The primary structure comprises 92 residues: SPbeta prophage-derived DNA-binding protein HU 2 (92 aa).

Phosphothreonine is present on Thr-4. The disordered stretch occupies residues Arg-55 to Pro-77.

It belongs to the bacterial histone-like protein family. Homodimer.

Histone-like DNA-binding protein which is capable of wrapping DNA to stabilize it, and thus to prevent its denaturation under extreme environmental conditions. This is SPbeta prophage-derived DNA-binding protein HU 2 (hup2) from Bacillus subtilis (strain 168).